Here is an 875-residue protein sequence, read N- to C-terminus: Valine--tRNA ligase (875 aa).

The 'HIGH' region motif lies at 45-55; the sequence is PNVTGVLHMGH. The 'KMSKS' region motif lies at 524 to 528; it reads KMSKS. Lys-527 is an ATP binding site. A coiled-coil region spans residues 803–837; the sequence is VKSLIDKTKELIRLEKQLEKYKMLNISVSKKLENE.

This sequence belongs to the class-I aminoacyl-tRNA synthetase family. ValS type 1 subfamily. Monomer.

Its subcellular location is the cytoplasm. It carries out the reaction tRNA(Val) + L-valine + ATP = L-valyl-tRNA(Val) + AMP + diphosphate. Its function is as follows. Catalyzes the attachment of valine to tRNA(Val). As ValRS can inadvertently accommodate and process structurally similar amino acids such as threonine, to avoid such errors, it has a 'posttransfer' editing activity that hydrolyzes mischarged Thr-tRNA(Val) in a tRNA-dependent manner. The polypeptide is Valine--tRNA ligase (Borreliella burgdorferi (strain ATCC 35210 / DSM 4680 / CIP 102532 / B31) (Borrelia burgdorferi)).